A 117-amino-acid chain; its full sequence is Large ribosomal subunit protein eL34 (117 aa).

S12 is subject to Phosphoserine. Residues K36 and K43 each carry the N6-acetyllysine modification. Residue K108 forms a Glycyl lysine isopeptide (Lys-Gly) (interchain with G-Cter in SUMO2) linkage.

The protein belongs to the eukaryotic ribosomal protein eL34 family. Component of the large ribosomal subunit.

Its subcellular location is the cytoplasm. It is found in the cytosol. The protein resides in the endoplasmic reticulum. In terms of biological role, component of the large ribosomal subunit. The ribosome is a large ribonucleoprotein complex responsible for the synthesis of proteins in the cell. This chain is Large ribosomal subunit protein eL34 (Rpl34), found in Mus musculus (Mouse).